Consider the following 464-residue polypeptide: Secretion-regulating guanine nucleotide exchange factor (464 aa).

RCC1 repeat units follow at residues 15–67 (AVLF…VTDG), 68–119 (GDLF…LTEK), 120–171 (GQVL…TTAT), 172–230 (GSVF…LTDT), 231–283 (GELY…KTET), 284–351 (GKVF…VIRD), and 352–402 (KCCS…LAVC). A disordered region spans residues 422-464 (DDTENTESQGAVDRDRLEGETISDLNPDRTRNGGGGCESETVQ). Ser429 carries the post-translational modification Phosphoserine.

As to quaternary structure, interacts with SEC5. The interaction occurs only in the presence of magnesium or manganese and is stimulated by dCTP or GTP.

Its subcellular location is the cytoplasm. It is found in the nucleus. Probable guanine nucleotide exchange factor (GEF), which may be involved in the secretion process. This Mus musculus (Mouse) protein is Secretion-regulating guanine nucleotide exchange factor (Sergef).